Here is a 208-residue protein sequence, read N- to C-terminus: Small ribosomal subunit protein uS4 (208 aa).

The region spanning 98 to 160 (RRLDNVVYRM…SKNNVQIQRA (63 aa)) is the S4 RNA-binding domain.

Belongs to the universal ribosomal protein uS4 family. As to quaternary structure, part of the 30S ribosomal subunit. Contacts protein S5. The interaction surface between S4 and S5 is involved in control of translational fidelity.

In terms of biological role, one of the primary rRNA binding proteins, it binds directly to 16S rRNA where it nucleates assembly of the body of the 30S subunit. Functionally, with S5 and S12 plays an important role in translational accuracy. The chain is Small ribosomal subunit protein uS4 from Nautilia profundicola (strain ATCC BAA-1463 / DSM 18972 / AmH).